The following is a 394-amino-acid chain: Chaperone protein DnaJ (394 aa).

The region spanning 6-71 (DYYEVLEVTK…DKRARYDQFG (66 aa)) is the J domain. A CR-type zinc finger spans residues 152-234 (GVEKKFKLKK…CGGEGIEYGE (83 aa)). Residues cysteine 165, cysteine 168, cysteine 182, cysteine 185, cysteine 208, cysteine 211, cysteine 222, and cysteine 225 each contribute to the Zn(2+) site. 4 CXXCXGXG motif repeats span residues 165–172 (CSHCHGTG), 182–189 (CPTCKGSG), 208–215 (CPTCNGEG), and 222–229 (CKVCGGEG).

This sequence belongs to the DnaJ family. In terms of assembly, homodimer. Requires Zn(2+) as cofactor.

The protein localises to the cytoplasm. Its function is as follows. Participates actively in the response to hyperosmotic and heat shock by preventing the aggregation of stress-denatured proteins and by disaggregating proteins, also in an autonomous, DnaK-independent fashion. Unfolded proteins bind initially to DnaJ; upon interaction with the DnaJ-bound protein, DnaK hydrolyzes its bound ATP, resulting in the formation of a stable complex. GrpE releases ADP from DnaK; ATP binding to DnaK triggers the release of the substrate protein, thus completing the reaction cycle. Several rounds of ATP-dependent interactions between DnaJ, DnaK and GrpE are required for fully efficient folding. Also involved, together with DnaK and GrpE, in the DNA replication of plasmids through activation of initiation proteins. In Bacteroides fragilis (strain YCH46), this protein is Chaperone protein DnaJ.